The following is a 347-amino-acid chain: MSSTDDRRFEVLRAIVADYVSTQEPVGSKALVERHNLGVSSATVRNDMAFLESEGYIAQPHTSSGRVPTDKGYRQFVDRIADVKPLSTAERRAILEFLESGVDLDDVLRRGVRLLAQLTRQVAVVQYPTLSASSVRHLEVVALTPARLLLVLITDSGRVDQRIVELGDVLDDEDLARLRGLLGGALDGKRLAAASIAVSELADEAPEDLRDAVVRSATVLVETLVEHPEERLVLGGTANLTRNAADFSGISGFPGSLRAVLEALEEQVVVLKLLAATQDAGTVTVRIGEETQVEQMRGTSVISTGYGAAGTVLGGMGVLGPTRMDYPGTIASVAAVARYIGQVLAER.

The protein belongs to the HrcA family.

Its function is as follows. Negative regulator of class I heat shock genes (grpE-dnaK-dnaJ and groELS operons). Prevents heat-shock induction of these operons. The sequence is that of Heat-inducible transcription repressor HrcA from Rhodococcus jostii (strain RHA1).